A 148-amino-acid chain; its full sequence is MLERLYDANIYNILSRLRPEKVRNKAIELYWVFRAIHICHAPLVLDIVRYEEPDFAELAFICAAYFGEPQVMYLLYKYMPLTRAVLTDAIQISLESNNQVGICYAYLMGGSLKGLVSAPLRKRLRAKLRSQRKKKDVLSPHDFLLLLQ.

Belongs to the asfivirus MGF 360 family.

Functionally, plays a role in virus cell tropism, and may be required for efficient virus replication in macrophages. This chain is Protein MGF 360-18R, found in African swine fever virus (strain Badajoz 1971 Vero-adapted) (Ba71V).